Reading from the N-terminus, the 1241-residue chain is uncharacterized protein (1241 aa).

Residues 21 to 49 (ILNDNVREINIAKKEIKQLREYVGILQQN) adopt a coiled-coil conformation. The next 3 helical transmembrane spans lie at 261-281 (VNAIITGLLSRMMMVTNFVLG), 918-938 (AVVGMFFPIIGASIEVLGLVA), and 947-967 (GHIVNGSLELTLAGVATVIGG). The disordered stretch occupies residues 1005-1028 (THIGKEDSNNGVSTSTNKRSIGKA). The span at 1013-1028 (NNGVSTSTNKRSIGKA) shows a compositional bias: polar residues.

The protein resides in the host membrane. This is an uncharacterized protein from Diadromus pulchellus (Parasitic wasp).